We begin with the raw amino-acid sequence, 161 residues long: Large ribosomal subunit protein uL15 (161 aa).

A disordered region spans residues methionine 1–serine 42. Residues arginine 21–glycine 37 show a composition bias toward gly residues.

The protein belongs to the universal ribosomal protein uL15 family. As to quaternary structure, part of the 50S ribosomal subunit.

Functionally, binds to the 23S rRNA. The protein is Large ribosomal subunit protein uL15 of Bradyrhizobium diazoefficiens (strain JCM 10833 / BCRC 13528 / IAM 13628 / NBRC 14792 / USDA 110).